Reading from the N-terminus, the 1126-residue chain is Formin-B (1126 aa).

The disordered stretch occupies residues M1 to N21. In terms of domain architecture, GBD/FH3 spans E38–S406. Residues L427–N447 show a composition bias toward low complexity. Residues L427–P462 are disordered. Residues V448–P462 show a composition bias toward polar residues. Residues Q463–L514 are a coiled coil. Over residues S518–P532 the composition is skewed to polar residues. Disordered regions lie at residues S518–S619 and A1004–T1078. One can recognise an FH1 domain in the interval N527–P611. Residues G543–G597 are compositionally biased toward pro residues. 3 stretches are compositionally biased toward low complexity: residues G598–V607, A1009–S1022, and S1032–Q1064. The region spanning P612–S1011 is the FH2 domain. The stretch at K980–A1010 forms a coiled coil. The 30-residue stretch at D1071 to S1100 folds into the DAD domain.

This sequence belongs to the formin homology family. Diaphanous subfamily. Interacts (via GBD/FH3 domain) with activated Rho-GTPases. Interacts with pfyA and pfyB.

Formins play an important role in the nucleation of actin and the formation of linear actin filaments. This Dictyostelium discoideum (Social amoeba) protein is Formin-B (forB).